Here is a 407-residue protein sequence, read N- to C-terminus: Argininosuccinate synthase (407 aa).

An ATP-binding site is contributed by Ala10 to Ser18. L-citrulline is bound by residues Tyr88 and Ser93. Gly118 lines the ATP pocket. Thr120, Asn124, and Asp125 together coordinate L-aspartate. An L-citrulline-binding site is contributed by Asn124. Arg128, Ser177, Ser186, Glu263, and Tyr275 together coordinate L-citrulline.

The protein belongs to the argininosuccinate synthase family. Type 1 subfamily. As to quaternary structure, homotetramer.

Its subcellular location is the cytoplasm. It carries out the reaction L-citrulline + L-aspartate + ATP = 2-(N(omega)-L-arginino)succinate + AMP + diphosphate + H(+). It participates in amino-acid biosynthesis; L-arginine biosynthesis; L-arginine from L-ornithine and carbamoyl phosphate: step 2/3. This Clostridium botulinum (strain Eklund 17B / Type B) protein is Argininosuccinate synthase.